Consider the following 204-residue polypeptide: Tumor necrosis factor alpha-induced protein 8-like protein 3 (204 aa).

Acidic residues predominate over residues Met-1–Glu-10. Positions Met-1–His-20 are disordered. Residues Val-21–Leu-204 form a binding to phosphoinositides region.

It belongs to the TNFAIP8 family. In terms of tissue distribution, widely expressed (at protein level).

It localises to the cytoplasm. It is found in the cell membrane. In terms of biological role, acts as a lipid transfer protein. Preferentially captures and shuttles two lipid second messengers, i.e., phosphatidylinositol 4,5- bisphosphate and phosphatidylinositol 3,4,5-trisphosphate and increases their levels in the plasma membrane. Additionally, may also function as a lipid-presenting protein to enhance the activity of the PI3K-AKT and MEK-ERK pathways. May act as a regulator of tumorigenesis through its activation of phospholipid signaling. This is Tumor necrosis factor alpha-induced protein 8-like protein 3 (Tnfaip8l3) from Mus musculus (Mouse).